The chain runs to 124 residues: MKVAVVLLVSLLAVTYALPEKRIFFGGIVDKVKDTFTKIFNKAKETFDKITDGFDVDFDEVVDKLIAQIHSTPTKAACKAACKKGAKLILKAAAPLASQVCGPACNAALAKLEKIADDINDDDD.

The first 17 residues, 1 to 17, serve as a signal peptide directing secretion; that stretch reads MKVAVVLLVSLLAVTYA. The propeptide occupies 18–74; it reads LPEKRIFFGGIVDKVKDTFTKIFNKAKETFDKITDGFDVDFDEVVDKLIAQIHSTPT.

In terms of processing, contains 2 disulfide bond. In terms of tissue distribution, expressed by the venom duct.

The protein localises to the secreted. This Californiconus californicus (California cone) protein is Conotoxin Cl14.12.